The sequence spans 576 residues: POU domain, class 6, transcription factor 1 (576 aa).

The interval 65-88 (PAEAGSCDPDHSAEATVAARSPSE) is disordered. Residues 414–488 (EDGINLEEIR…VLEKWLMEAE (75 aa)) form the POU-specific domain. The segment at residues 509-568 (KRKRRTSFTPQAIEALNAYFEKNPLPTGQEITEIAKELNYDREVVRVWFCNRRQTLKNTS) is a DNA-binding region (homeobox).

Belongs to the POU transcription factor family. Class-6 subfamily. As to expression, isoform C1 and isoform C2 are found in the brain, while isoform C7 is found in the testis.

It localises to the nucleus. Functionally, transcription factor that binds preferentially to a variant of the octamer motif (5'-ATGATAAT-3'). In Mus musculus (Mouse), this protein is POU domain, class 6, transcription factor 1 (Pou6f1).